A 79-amino-acid polypeptide reads, in one-letter code: uncharacterized protein (79 aa).

The N-terminal stretch at 1–20 is a signal peptide; it reads MSQLMGIITRLQSLQETAEA.

This is an uncharacterized protein from Bacillus subtilis (strain 168).